A 103-amino-acid chain; its full sequence is Integration host factor subunit beta (103 aa).

Belongs to the bacterial histone-like protein family. As to quaternary structure, heterodimer of an alpha and a beta chain.

This protein is one of the two subunits of integration host factor, a specific DNA-binding protein that functions in genetic recombination as well as in transcriptional and translational control. The chain is Integration host factor subunit beta from Bradyrhizobium sp. (strain BTAi1 / ATCC BAA-1182).